Consider the following 693-residue polypeptide: Elongation factor G 1 (693 aa).

The tr-type G domain maps to 4–281 (NKLRNIGISA…AVTRFLPSPH (278 aa)). Residues 13–20 (AHIDSGKT), 80–84 (DTPGH), and 134–137 (NKCD) each bind GTP.

This sequence belongs to the TRAFAC class translation factor GTPase superfamily. Classic translation factor GTPase family. EF-G/EF-2 subfamily.

Its subcellular location is the cytoplasm. Functionally, catalyzes the GTP-dependent ribosomal translocation step during translation elongation. During this step, the ribosome changes from the pre-translocational (PRE) to the post-translocational (POST) state as the newly formed A-site-bound peptidyl-tRNA and P-site-bound deacylated tRNA move to the P and E sites, respectively. Catalyzes the coordinated movement of the two tRNA molecules, the mRNA and conformational changes in the ribosome. The sequence is that of Elongation factor G 1 from Borrelia garinii subsp. bavariensis (strain ATCC BAA-2496 / DSM 23469 / PBi) (Borreliella bavariensis).